The following is a 117-amino-acid chain: UPF0102 protein YPN_3432 (117 aa).

The protein belongs to the UPF0102 family.

The protein is UPF0102 protein YPN_3432 of Yersinia pestis bv. Antiqua (strain Nepal516).